The following is a 342-amino-acid chain: MDSRGFLSLRCLLVLALASKLSCGTGESLMNCPEVPGKLGSSLQLSLASEGISKRMNKSIHILVTRAESPGNSIKKKIVSLDLPEGGSPRYLENGYKFHLENLTLRILESRRENEGWYFMTLEENFSVQHFCLQLKLYEQVSTPEIKVLNWTQENGNCSMMLACEVEKGDNVVYSWSEKLGIDPLIPANSSHLLHLSLGPQHVNNVYVCTVSNPVSNRSWSFNPWSKCRPESSVPRQWRLYAGLFLGGIVGVILIFEVVLLLLRRRGKTNHYKPTKEEKSLTIYAQVQKSGSTQKKPDPLPAEDPCTTIYVAATEPVPEPAPEPVQEPHSITVYASVTFPES.

Positions 1-26 are cleaved as a signal peptide; that stretch reads MDSRGFLSLRCLLVLALASKLSCGTG. Topologically, residues 27–237 are extracellular; that stretch reads ESLMNCPEVP…CRPESSVPRQ (211 aa). The region spanning 29–138 is the Ig-like V-type domain; sequence LMNCPEVPGK…QHFCLQLKLY (110 aa). 7 N-linked (GlcNAc...) asparagine glycosylation sites follow: Asn-57, Asn-102, Asn-125, Asn-150, Asn-157, Asn-189, and Asn-217. The Ig-like C2-type domain occupies 144-223; it reads PEIKVLNWTQ…PVSNRSWSFN (80 aa). 2 disulfide bridges follow: Cys-158–Cys-228 and Cys-164–Cys-209. The helical transmembrane segment at 238 to 261 threads the bilayer; that stretch reads WRLYAGLFLGGIVGVILIFEVVLL. The Cytoplasmic segment spans residues 262-342; it reads LLRRRGKTNH…VYASVTFPES (81 aa). Positions 282-287 match the ITSM 1 motif; the sequence is TIYAQV. Phosphotyrosine; by FYN occurs at positions 284, 310, and 334. Residues 310–315 carry the SH2-binding motif; it reads YVAATE. An ITSM 2 motif is present at residues 332–337; it reads TVYASV.

In terms of assembly, interacts (via cytoplasmic domain) with SH2D1A and SH2D1B; SH2D1A mediates association with FYN. Interacts (via cytoplasmic domain phosphorylated on tyrosine residues) with INPP5D and PTPN11; presence of SH2D1A facilitates binding to INPP5D. Interacts with MAP4K1. Interacts with PIK3C3, BECN1 and UVRAG; indicative for an association with PI3K complex II (PI3KC3-C2). Interacts with canine distemper virus HN protein; suggesting that it may serve as a receptor. Post-translationally, phosphorylated on tyrosine residues by FYN.

Its subcellular location is the cell membrane. Functionally, self-ligand receptor of the signaling lymphocytic activation molecule (SLAM) family. SLAM receptors triggered by homo- or heterotypic cell-cell interactions are modulating the activation and differentiation of a wide variety of immune cells and thus are involved in the regulation and interconnection of both innate and adaptive immune response. Activities are controlled by presence or absence of small cytoplasmic adapter proteins, SH2D1A/SAP and/or SH2D1B/EAT-2. SLAMF1-induced signal-transduction events in T-lymphocytes are different from those in B-cells. Two modes of SLAMF1 signaling seem to exist: one depending on SH2D1A (and perhaps SH2D1B) and another in which protein-tyrosine phosphatase 2C (PTPN11)-dependent signal transduction operates. Initially it has been proposed that association with SH2D1A prevents binding to inhibitory effectors including INPP5D/SHIP1 and PTPN11/SHP-2. However, signaling is also regulated by SH2D1A which can simultaneously interact with and recruit FYN which subsequently phosphorylates and activates SLAMF1. Mediates IL-2-independent proliferation of activated T cells during immune responses and induces IFN-gamma production. Downstreaming signaling involves INPP5D/SHIP1, DOK1 and DOK2 leading to inhibited IFN-gamma production in T-cells, and PRKCQ, BCL10 and NFKB1 leading to increased T-cell activation and Th2 cytokine production. Promotes T-cell receptor-induced IL-4 secretion by CD4(+) cells. Inhibits antigen receptor-mediated production of IFN-gamma, but not IL-2, in CD4(-)/CD8(-) T-cells. Required for IL-4 production by germinal centers T follicular helper (T(Fh))cells. May inhibit CD40-induced signal transduction in monocyte-derived dendritic cells. May play a role in allergic responses and may regulate allergen-induced Th2 cytokine and Th1 cytokine secretion. In conjunction with SLAMF6 controls the transition between positive selection and the subsequent expansion and differentiation of the thymocytic natural killer T (NKT) cell lineage. Involved in the peripheral differentiation of indifferent natural killer T (iNKT) cells toward a regulatory NKT2 type. In macrophages involved in down-regulation of IL-12, TNF-alpha and nitric oxide in response to lipopolysaccharide (LPS). In B-cells activates the ERK signaling pathway independently of SH2D1A but implicating both, SYK and INPP5D, and activates Akt signaling dependent on SYK and SH2D1A. In conjunction with SLAMF5 and SLAMF6 may be a negative regulator of the humoral immune response. The chain is Signaling lymphocytic activation molecule (SLAMF1) from Canis lupus familiaris (Dog).